We begin with the raw amino-acid sequence, 85 residues long: Conotoxin Mi15b (85 aa).

Residues 1 to 23 form the signal peptide; it reads MEKLTVLILVAIVLLTIQVLGQS. Positions 24 to 49 are excised as a propeptide; that stretch reads DRDKHPKRRPRQYATKRLSALMKGHR. Pyrrolidone carboxylic acid is present on glutamine 50.

This sequence belongs to the conotoxin O2 superfamily. Post-translationally, contains 4 disulfide bonds. Expressed by the venom duct.

The protein localises to the secreted. In Conus miles (Soldier cone), this protein is Conotoxin Mi15b.